The chain runs to 158 residues: Protein-export protein SecB (158 aa).

This sequence belongs to the SecB family. As to quaternary structure, homotetramer, a dimer of dimers. One homotetramer interacts with 1 SecA dimer.

The protein resides in the cytoplasm. In terms of biological role, one of the proteins required for the normal export of preproteins out of the cell cytoplasm. It is a molecular chaperone that binds to a subset of precursor proteins, maintaining them in a translocation-competent state. It also specifically binds to its receptor SecA. The protein is Protein-export protein SecB of Anaplasma phagocytophilum (strain HZ).